Here is a 646-residue protein sequence, read N- to C-terminus: Acetyl-coenzyme A synthetase (646 aa).

Residues 189–192 (RGPK), Thr307, and Asn331 each bind CoA. Residues 383–385 (GEP), 407–412 (DTWWQT), Asp496, and Arg511 contribute to the ATP site. Position 519 (Ser519) interacts with CoA. Arg522 serves as a coordination point for ATP. 3 residues coordinate Mg(2+): Val533, His535, and Val538. Arg580 contributes to the CoA binding site. Residue Lys605 is modified to N6-acetyllysine.

It belongs to the ATP-dependent AMP-binding enzyme family. Mg(2+) is required as a cofactor. Acetylated. Deacetylation by the SIR2-homolog deacetylase activates the enzyme.

It carries out the reaction acetate + ATP + CoA = acetyl-CoA + AMP + diphosphate. Functionally, catalyzes the conversion of acetate into acetyl-CoA (AcCoA), an essential intermediate at the junction of anabolic and catabolic pathways. AcsA undergoes a two-step reaction. In the first half reaction, AcsA combines acetate with ATP to form acetyl-adenylate (AcAMP) intermediate. In the second half reaction, it can then transfer the acetyl group from AcAMP to the sulfhydryl group of CoA, forming the product AcCoA. This Desulfatibacillum aliphaticivorans protein is Acetyl-coenzyme A synthetase.